We begin with the raw amino-acid sequence, 901 residues long: Disease resistance RPP8-like protein 3 (901 aa).

Positions 15–56 (ALLNRESERLNGIDEQVDGLKRQLRGLQSLLKDADAKKHGSD) form a coiled coil. The 310-residue stretch at 144–453 (LQDIQREIRQ…AEGIYDGLTI (310 aa)) folds into the NB-ARC domain. Residues 190–197 (GMGGIGKT) and 385–392 (GAQIVGKS) contribute to the ATP site. 3 LRR repeats span residues 567 to 591 (LPLL…SIGG), 592 to 615 (LIHL…IRNL), and 833 to 858 (MPCL…KYVT).

The protein belongs to the disease resistance NB-LRR family. RPP8/HRT subfamily.

Functionally, disease resistance protein. This chain is Disease resistance RPP8-like protein 3 (RPP8L3), found in Arabidopsis thaliana (Mouse-ear cress).